A 371-amino-acid polypeptide reads, in one-letter code: UDP-N-acetylglucosamine--N-acetylmuramyl-(pentapeptide) pyrophosphoryl-undecaprenol N-acetylglucosamine transferase (371 aa).

UDP-N-acetyl-alpha-D-glucosamine is bound by residues 10-12, Asn124, Arg165, Ser191, Ile246, and Gln291; that span reads TGG.

The protein belongs to the glycosyltransferase 28 family. MurG subfamily.

It is found in the cell inner membrane. It carries out the reaction di-trans,octa-cis-undecaprenyl diphospho-N-acetyl-alpha-D-muramoyl-L-alanyl-D-glutamyl-meso-2,6-diaminopimeloyl-D-alanyl-D-alanine + UDP-N-acetyl-alpha-D-glucosamine = di-trans,octa-cis-undecaprenyl diphospho-[N-acetyl-alpha-D-glucosaminyl-(1-&gt;4)]-N-acetyl-alpha-D-muramoyl-L-alanyl-D-glutamyl-meso-2,6-diaminopimeloyl-D-alanyl-D-alanine + UDP + H(+). Its pathway is cell wall biogenesis; peptidoglycan biosynthesis. Functionally, cell wall formation. Catalyzes the transfer of a GlcNAc subunit on undecaprenyl-pyrophosphoryl-MurNAc-pentapeptide (lipid intermediate I) to form undecaprenyl-pyrophosphoryl-MurNAc-(pentapeptide)GlcNAc (lipid intermediate II). In Geobacter sp. (strain M21), this protein is UDP-N-acetylglucosamine--N-acetylmuramyl-(pentapeptide) pyrophosphoryl-undecaprenol N-acetylglucosamine transferase.